Here is a 355-residue protein sequence, read N- to C-terminus: 3-dehydroquinate synthase (355 aa).

NAD(+)-binding positions include 71–76, 105–109, 129–130, Lys-142, and Lys-151; these read EGEASK, GVVGD, and TS. Positions 184, 246, and 263 each coordinate Zn(2+).

It belongs to the sugar phosphate cyclases superfamily. Dehydroquinate synthase family. Requires Co(2+) as cofactor. Zn(2+) is required as a cofactor. The cofactor is NAD(+).

It is found in the cytoplasm. The enzyme catalyses 7-phospho-2-dehydro-3-deoxy-D-arabino-heptonate = 3-dehydroquinate + phosphate. It functions in the pathway metabolic intermediate biosynthesis; chorismate biosynthesis; chorismate from D-erythrose 4-phosphate and phosphoenolpyruvate: step 2/7. Catalyzes the conversion of 3-deoxy-D-arabino-heptulosonate 7-phosphate (DAHP) to dehydroquinate (DHQ). The sequence is that of 3-dehydroquinate synthase from Streptococcus thermophilus (strain ATCC BAA-491 / LMD-9).